Here is a 294-residue protein sequence, read N- to C-terminus: Glycine--tRNA ligase alpha subunit (294 aa).

Belongs to the class-II aminoacyl-tRNA synthetase family. In terms of assembly, tetramer of two alpha and two beta subunits.

It is found in the cytoplasm. The enzyme catalyses tRNA(Gly) + glycine + ATP = glycyl-tRNA(Gly) + AMP + diphosphate. This is Glycine--tRNA ligase alpha subunit from Sulfurovum sp. (strain NBC37-1).